Here is a 428-residue protein sequence, read N- to C-terminus: D-amino acid dehydrogenase (428 aa).

3-17 (VVILGSGVVGVASAY) lines the FAD pocket.

The protein belongs to the DadA oxidoreductase family. FAD is required as a cofactor.

It carries out the reaction a D-alpha-amino acid + A + H2O = a 2-oxocarboxylate + AH2 + NH4(+). Its pathway is amino-acid degradation; D-alanine degradation; NH(3) and pyruvate from D-alanine: step 1/1. Oxidative deamination of D-amino acids. The polypeptide is D-amino acid dehydrogenase (Burkholderia thailandensis (strain ATCC 700388 / DSM 13276 / CCUG 48851 / CIP 106301 / E264)).